A 342-amino-acid polypeptide reads, in one-letter code: DDB1- and CUL4-associated factor 7 (342 aa).

WD repeat units follow at residues 6 to 52, 60 to 100, 108 to 150, 165 to 206, 213 to 252, 257 to 296, and 303 to 342; these read KRKE…LVGL, ICRN…VWRV, ECLL…IWGL, HVKT…MFDL, TIIY…ILDV, TPVA…IWDI, and IEDP…ILRV.

It belongs to the WD repeat DCAF7 family. Interacts with DYRK1A, DYRK1B and DIAPH1. Interacts with DDB1. Interacts with ZNF703. Interacts with human adenovirus 5 E1A protein.

The protein resides in the cytoplasm. It localises to the nucleus. It functions in the pathway protein modification; protein ubiquitination. Its function is as follows. Involved in craniofacial development. Acts upstream of the EDN1 pathway and is required for formation of the upper jaw equivalent, the palatoquadrate. The activity required for EDN1 pathway function differs between the first and second arches. Associates with DIAPH1 and controls GLI1 transcriptional activity. Could be involved in normal and disease skin development. May function as a substrate receptor for CUL4-DDB1 E3 ubiquitin-protein ligase complex. This is DDB1- and CUL4-associated factor 7 (DCAF7) from Homo sapiens (Human).